The chain runs to 458 residues: Argininosuccinate lyase (458 aa).

It belongs to the lyase 1 family. Argininosuccinate lyase subfamily.

The protein localises to the cytoplasm. The catalysed reaction is 2-(N(omega)-L-arginino)succinate = fumarate + L-arginine. Its pathway is amino-acid biosynthesis; L-arginine biosynthesis; L-arginine from L-ornithine and carbamoyl phosphate: step 3/3. The sequence is that of Argininosuccinate lyase from Citrifermentans bemidjiense (strain ATCC BAA-1014 / DSM 16622 / JCM 12645 / Bem) (Geobacter bemidjiensis).